Consider the following 224-residue polypeptide: Phosphoglycolate phosphatase (224 aa).

The active-site Nucleophile is Asp8. Mg(2+) is bound by residues Asp8, Asp10, Gly11, and Gly43. Lys151 lines the substrate pocket. Mg(2+) contacts are provided by Asp174, Ser175, and Asp178.

This sequence belongs to the HAD-like hydrolase superfamily. Archaeal SPP-like hydrolase family. As to quaternary structure, homodimer. Mg(2+) serves as cofactor.

The enzyme catalyses 2-phosphoglycolate + H2O = glycolate + phosphate. Inhibited by Ca(2+) ions and by high chloride ion concentration. By contrast, low chloride concentration (up to 50 mM) slightly activate the enzyme. Catalyzes the dephosphorylation of 2-phosphoglycolate. Also has significant, but less efficient, pyrophosphatase activity, since it is able to catalyze the release of phosphate from inorganic pyrophosphate (PPi). This is Phosphoglycolate phosphatase from Thermoplasma acidophilum (strain ATCC 25905 / DSM 1728 / JCM 9062 / NBRC 15155 / AMRC-C165).